A 243-amino-acid polypeptide reads, in one-letter code: uncharacterized protein (243 aa).

This is an uncharacterized protein from Acidianus bottle-shaped virus (isolate Italy/Pozzuoli) (ABV).